A 343-amino-acid chain; its full sequence is Tribbles homolog 2 (343 aa).

The disordered stretch occupies residues 25–50 (EELSSIRSAEPSQSFSPNLGSPSPPE). The span at 29-45 (SIRSAEPSQSFSPNLGS) shows a compositional bias: polar residues. Residues 61–308 (IGKYLLLEPL…SQEILDHPWF (248 aa)) enclose the Protein kinase domain.

Belongs to the protein kinase superfamily. CAMK Ser/Thr protein kinase family. Tribbles subfamily.

The protein localises to the cytoplasm. Its subcellular location is the cytoskeleton. In terms of biological role, interacts with MAPK kinases and regulates activation of MAP kinases. Does not display kinase activity. In Mus musculus (Mouse), this protein is Tribbles homolog 2.